The chain runs to 193 residues: MTRMLIVGPPGSGKGTQAEWISDRLGIVAISTGDIFRANVKGETPLGLEAKKYMDAGDYVPDSVTNKMVRDRLQQEDVQHGFLLDGYPRTSAQVNELDDILSAGGEKLDVVLQLTADDEELVRRLLGRAKESGRSDDDEKVIRHRLNLYHTQTEAVVVRYQKLGLLAKVDGIGAIDEVTDRIMAAIDGVRAAK.

11–16 (GSGKGT) provides a ligand contact to ATP. The tract at residues 31–60 (STGDIFRANVKGETPLGLEAKKYMDAGDYV) is NMP. AMP-binding positions include Thr-32, Arg-37, 58–60 (DYV), 86–89 (GYPR), and Gln-93. Residues 127–137 (GRAKESGRSDD) are LID. Residue Arg-128 coordinates ATP. Arg-134 and Arg-145 together coordinate AMP. Gly-173 lines the ATP pocket.

It belongs to the adenylate kinase family. As to quaternary structure, monomer.

Its subcellular location is the cytoplasm. It carries out the reaction AMP + ATP = 2 ADP. It participates in purine metabolism; AMP biosynthesis via salvage pathway; AMP from ADP: step 1/1. Functionally, catalyzes the reversible transfer of the terminal phosphate group between ATP and AMP. Plays an important role in cellular energy homeostasis and in adenine nucleotide metabolism. In Renibacterium salmoninarum (strain ATCC 33209 / DSM 20767 / JCM 11484 / NBRC 15589 / NCIMB 2235), this protein is Adenylate kinase.